The primary structure comprises 158 residues: Transcription elongation factor GreA (158 aa).

This sequence belongs to the GreA/GreB family.

Functionally, necessary for efficient RNA polymerase transcription elongation past template-encoded arresting sites. The arresting sites in DNA have the property of trapping a certain fraction of elongating RNA polymerases that pass through, resulting in locked ternary complexes. Cleavage of the nascent transcript by cleavage factors such as GreA or GreB allows the resumption of elongation from the new 3'terminus. GreA releases sequences of 2 to 3 nucleotides. The polypeptide is Transcription elongation factor GreA (Sinorhizobium medicae (strain WSM419) (Ensifer medicae)).